The chain runs to 319 residues: ATP-dependent 6-phosphofructokinase (319 aa).

ATP is bound at residue glycine 11. 21 to 25 is an ADP binding site; sequence RAVVR. ATP-binding positions include 72–73 and 102–105; these read RC and GDGS. Aspartate 103 contacts Mg(2+). 125–127 provides a ligand contact to substrate; sequence TID. Catalysis depends on aspartate 127, which acts as the Proton acceptor. Arginine 154 contributes to the ADP binding site. Residues arginine 162 and 169–171 each bind substrate; that span reads MGR. Residues 185–187, arginine 211, and 213–215 contribute to the ADP site; these read GAE and KKH. Residues glutamate 222, arginine 243, and 249–252 contribute to the substrate site; that span reads HIQR.

This sequence belongs to the phosphofructokinase type A (PFKA) family. ATP-dependent PFK group I subfamily. Prokaryotic clade 'B1' sub-subfamily. Homotetramer. Requires Mg(2+) as cofactor.

The protein resides in the cytoplasm. The enzyme catalyses beta-D-fructose 6-phosphate + ATP = beta-D-fructose 1,6-bisphosphate + ADP + H(+). Its pathway is carbohydrate degradation; glycolysis; D-glyceraldehyde 3-phosphate and glycerone phosphate from D-glucose: step 3/4. With respect to regulation, allosterically activated by ADP and other diphosphonucleosides, and allosterically inhibited by phosphoenolpyruvate. Catalyzes the phosphorylation of D-fructose 6-phosphate to fructose 1,6-bisphosphate by ATP, the first committing step of glycolysis. The sequence is that of ATP-dependent 6-phosphofructokinase from Bacillus velezensis (strain DSM 23117 / BGSC 10A6 / LMG 26770 / FZB42) (Bacillus amyloliquefaciens subsp. plantarum).